Here is a 450-residue protein sequence, read N- to C-terminus: Probable ECA polymerase (450 aa).

The next 11 membrane-spanning stretches (helical) occupy residues 6–26, 37–57, 63–83, 118–138, 155–175, 181–201, 207–227, 228–248, 341–361, 378–398, and 410–430; these read FSGL…LTWF, VFFS…TSVL, VGVA…CFYA, VILM…NGFL, GVAL…VYFL, AWLF…MIVG, IIIA…ISLW, MLAA…LKRY, LVVM…GLII, YKAA…IVLA, and VFFI…YWLF.

The protein belongs to the WzyE family. Probably part of a complex composed of WzxE, WzyE and WzzE.

It is found in the cell inner membrane. The protein operates within bacterial outer membrane biogenesis; enterobacterial common antigen biosynthesis. In terms of biological role, probably involved in the polymerization of enterobacterial common antigen (ECA) trisaccharide repeat units. This Escherichia coli O139:H28 (strain E24377A / ETEC) protein is Probable ECA polymerase.